The primary structure comprises 200 residues: 3-isopropylmalate dehydratase small subunit (200 aa).

It belongs to the LeuD family. LeuD type 1 subfamily. As to quaternary structure, heterodimer of LeuC and LeuD.

It carries out the reaction (2R,3S)-3-isopropylmalate = (2S)-2-isopropylmalate. It participates in amino-acid biosynthesis; L-leucine biosynthesis; L-leucine from 3-methyl-2-oxobutanoate: step 2/4. Catalyzes the isomerization between 2-isopropylmalate and 3-isopropylmalate, via the formation of 2-isopropylmaleate. The protein is 3-isopropylmalate dehydratase small subunit of Proteus mirabilis (strain HI4320).